The sequence spans 433 residues: E1B 55 kDa protein (433 aa).

Belongs to the adenoviridae E1B 55 kDa protein family. In terms of assembly, interacts with host PML-4 and PML-5; this interaction promotes efficient subnuclear targeting of E1B-55K to PML nuclear bodies. Interacts with E4-ORF3 protein. Interacts with E4-ORF6 protein.

Its subcellular location is the host nucleus. The protein resides in the host cytoplasm. In terms of biological role, plays a major role to prevent cellular inhibition of viral genome replication. Assembles an SCF-like E3 ubiquitin ligase complex based on the cellular proteins ELOB, ELOC, CUL5 and RBX1, in cooperation with viral E4orf6. This viral RING-type ligase ubiquitinates cellular substrates and targets them to proteasomal degradation: TP53/p53, LIG4, MRE11-RAD50-NBS1 (MRN) complex, ITGA3, DAXX and BLM. E1B-55K probably acts as the substrate-specific adapter of the SCF-like E3 ubiquitin ligase complex. Degradation of host TP53/p53 activity is essential for preventing E1A-induced TP53 accumulation that would otherwise lead to cell apoptosis and growth arrest. E1B-55K also inactivates TP53 transcription-factor activity by binding its transactivation domain. E1B-55K also functions as a SUMO1 E3 ligase for TP53 which causes the latter to be sequestered in promyelocytic leukemia (PML) nuclear bodies thereby contributing to maximal inhibition of TP53 function. The sequence is that of E1B 55 kDa protein from Murine adenovirus A serotype 1 (MAdV-1).